The chain runs to 220 residues: MFAVIKTGGKQYRVAANDTLLIERIAGEVGEIVQIGNVLAVGEGENVTIGAPFVEGASVAAEVVEQGRGPKVIAFKKRRRQNSRRKRGHRQLLTTVRIAEILLDGAKPSKKVAAKPATSEEKAAEEKPAKAKKEAAEKGASPRETKAAPLFSAPEGEPDNLTVIKGIGPVAAGQLKEQGLTTFAQLAALSDEDIARIDEAMPFSTDQIKDWREQAKEVAK.

The interval 109-158 is disordered; the sequence is SKKVAAKPATSEEKAAEEKPAKAKKEAAEKGASPRETKAAPLFSAPEGEP. The span at 118-146 shows a compositional bias: basic and acidic residues; that stretch reads TSEEKAAEEKPAKAKKEAAEKGASPRETK.

This sequence belongs to the bacterial ribosomal protein bL21 family. As to quaternary structure, part of the 50S ribosomal subunit. Contacts protein L20.

Its function is as follows. This protein binds to 23S rRNA in the presence of protein L20. The polypeptide is Large ribosomal subunit protein bL21 (Chelativorans sp. (strain BNC1)).